Reading from the N-terminus, the 81-residue chain is 8.6 kDa transglutaminase substrate (81 aa).

As to quaternary structure, multimeric. In terms of tissue distribution, hemolymph; Hemocyte.

The sequence is that of 8.6 kDa transglutaminase substrate from Tachypleus tridentatus (Japanese horseshoe crab).